A 357-amino-acid polypeptide reads, in one-letter code: DENN domain-containing protein 10 (357 aa).

The uDENN domain maps to 1 to 140; it reads MAAAEVADTQ…TKGICQSEEN (140 aa). The region spanning 165 to 299 is the cDENN domain; the sequence is QFGMETVILH…PEKSESHVIQ (135 aa). The dDENN domain occupies 301-357; that stretch reads IALKTREIFTNLAPFSEVSADGEKRVLNLEALKQKRFPPATENFLYHLAAAEQMLKI.

This sequence belongs to the DENND10 family. As to quaternary structure, interacts with the coiled-coil heterodimer of CCDC22 and CCDC93; the interaction is direct. Interacts with RAB27A and RAB27B (GDP-bound forms preferentially).

The protein resides in the late endosome. Guanine nucleotide exchange factor (GEF) regulating homeostasis of late endocytic pathway, including endosomal positioning, maturation and secretion, possibly through activating Rab proteins such as RAB27A and RAB27B. Promotes the exchange of GDP to GTP, converting inactive GDP-bound RAB27A and RAB27B into their active GTP-bound form. This Homo sapiens (Human) protein is DENN domain-containing protein 10.